A 167-amino-acid chain; its full sequence is MSHIEKQAGELQEKLIAVNRVSKTVKGGRIFSFTALTVVGDGNGRVGFGYGKAREVPAAIQKAMEKARRAMINVALDNGTLQHPVKGAHTGSRVFMQPASEGTGIIAGGAMRAVLEVAGVHNVLAKAYGSTNPINVVRATIAALEDMKSPEMVAAKRGKSVEEILGK.

Residues 11-74 form the S5 DRBM domain; that stretch reads LQEKLIAVNR…EKARRAMINV (64 aa).

This sequence belongs to the universal ribosomal protein uS5 family. In terms of assembly, part of the 30S ribosomal subunit. Contacts proteins S4 and S8.

In terms of biological role, with S4 and S12 plays an important role in translational accuracy. Located at the back of the 30S subunit body where it stabilizes the conformation of the head with respect to the body. The polypeptide is Small ribosomal subunit protein uS5 (Yersinia enterocolitica serotype O:8 / biotype 1B (strain NCTC 13174 / 8081)).